The following is a 581-amino-acid chain: NADH-quinone oxidoreductase subunit C/D (581 aa).

Residues methionine 1 to phenylalanine 172 are NADH dehydrogenase I subunit C. The tract at residues glutamate 196–arginine 581 is NADH dehydrogenase I subunit D.

In the N-terminal section; belongs to the complex I 30 kDa subunit family. The protein in the C-terminal section; belongs to the complex I 49 kDa subunit family. As to quaternary structure, NDH-1 is composed of 13 different subunits. Subunits NuoB, CD, E, F, and G constitute the peripheral sector of the complex.

The protein localises to the cell inner membrane. It catalyses the reaction a quinone + NADH + 5 H(+)(in) = a quinol + NAD(+) + 4 H(+)(out). In terms of biological role, NDH-1 shuttles electrons from NADH, via FMN and iron-sulfur (Fe-S) centers, to quinones in the respiratory chain. The immediate electron acceptor for the enzyme in this species is believed to be ubiquinone. Couples the redox reaction to proton translocation (for every two electrons transferred, four hydrogen ions are translocated across the cytoplasmic membrane), and thus conserves the redox energy in a proton gradient. The polypeptide is NADH-quinone oxidoreductase subunit C/D (Rhodopseudomonas palustris (strain TIE-1)).